We begin with the raw amino-acid sequence, 587 residues long: Mitogen-activated protein kinase 4 (587 aa).

One can recognise a Protein kinase domain in the interval 20 to 312 (FVDFQPLGFG…AEMGLQHPYM (293 aa)). ATP is bound by residues 26-34 (LGFGVNGLV) and Lys49. Residue Asp149 is the Proton acceptor of the active site. A Phosphoserine; by PAK1, PAK2 and PAK3 modification is found at Ser186. The SEG motif motif lies at 186 to 188 (SEG). Positions 328 to 333 (FRIEDE) match the FRIEDE motif motif. Basic and acidic residues-rich tracts occupy residues 373–383 (QDASEVQRDPR) and 395–413 (VDPR…EQSH). The disordered stretch occupies residues 373-413 (QDASEVQRDPRAGSAPLAEDVQVDPRKDSHSSSERFLEQSH). Residue Ser434 is modified to Phosphoserine. The segment at 499 to 534 (STQGGPEHASPPADDPERRLSASPPGRPAPVDGGAS) is disordered.

The protein belongs to the protein kinase superfamily. CMGC Ser/Thr protein kinase family. MAP kinase subfamily. Homodimer. Heterodimer with ERK3/MAPK6. Interacts with (via FRIEDE motif) MAPKAPK5. Mg(2+) is required as a cofactor. Phosphorylated at Ser-186 by PAK1, PAK2 and PAK3 resulting in catalytic activation. Phosphorylated by MAPKAPK5 at other sites. As to expression, high expression in heart and brain.

Its subcellular location is the cytoplasm. It localises to the nucleus. The catalysed reaction is L-seryl-[protein] + ATP = O-phospho-L-seryl-[protein] + ADP + H(+). It carries out the reaction L-threonyl-[protein] + ATP = O-phospho-L-threonyl-[protein] + ADP + H(+). Its activity is regulated as follows. Activated by phosphorylation at Ser-186. Its function is as follows. Atypical MAPK protein. Phosphorylates microtubule-associated protein 2 (MAP2) and MAPKAPK5. The precise role of the complex formed with MAPKAPK5 is still unclear, but the complex follows a complex set of phosphorylation events: upon interaction with atypical MAPKAPK5, ERK4/MAPK4 is phosphorylated at Ser-186 and then mediates phosphorylation and activation of MAPKAPK5, which in turn phosphorylates ERK4/MAPK4. May promote entry in the cell cycle. In Homo sapiens (Human), this protein is Mitogen-activated protein kinase 4 (MAPK4).